A 406-amino-acid chain; its full sequence is 5-cytosine rRNA methyltransferase NSUN4 (406 aa).

S-adenosyl-L-methionine is bound by residues Gly207, Gly208, Lys209, Asp226, Arg231, Asp259, Gly260, and Asp277. The active-site Nucleophile is the Cys332.

The protein belongs to the class I-like SAM-binding methyltransferase superfamily. RsmB/NOP family.

The protein resides in the mitochondrion. It carries out the reaction a cytidine in rRNA + S-adenosyl-L-methionine = a 5-methylcytidine in rRNA + S-adenosyl-L-homocysteine + H(+). The enzyme catalyses a cytidine in mRNA + S-adenosyl-L-methionine = a 5-methylcytidine in mRNA + S-adenosyl-L-homocysteine + H(+). Its function is as follows. Involved in mitochondrial ribosome large subunit biogenesis. Mitochondrial RNA cytosine C(5)-methyltransferase that methylates cytosine to 5-methylcytosine (m5C) in various RNAs, such as rRNAs, mRNAs and some long non-coding RNAs (lncRNAs). Involved in mitochondrial ribosome small subunit (SSU) maturation by catalyzing methylation of mitochondrial 12S rRNA. The sequence is that of 5-cytosine rRNA methyltransferase NSUN4 (nsun4) from Xenopus tropicalis (Western clawed frog).